We begin with the raw amino-acid sequence, 513 residues long: MRRIKIFDTTLRDGEQSPGASMSIEEKVEMALMLEDLGVDLIEAGFPVSSPVQFEAVKRVASAVQKPIVVGLARCVEKDIDAAYEALKDRPKDKRMIHVFIATSPIHRKYKLRMEKEEILERIRRYVGYAKQFFDLVEFSAEDASRTEVPFLIEAYKTAIEAGATTINVPDTVGYALPDEFGELIKTLREGVPGIENVDLSVHCHNDLGLAVANSLAAVQNGATQVEVTLNGIGERAGNCALEEFVMILKVRKDKLPYETGIKTELIYPASRLLTHITGLIPSRNKPIVGENVFLHESGIHQDGVLKHRETYEIMKPSDIGRSSETLVLGRHSGKHALRKKLETYGIKLDEETFQKVFEKFTELADRKKEVYDDDLFSIVSEVLREPINGYKLVHFHVHTGNTLLPTAAVVLQVGNEKREAAEAGNGPVDAIFKAIDKALGIQPKLEEYIIQAVGTGKNAQGEVKLTLRIDNELYSGRGVSTDIVEASAIAYINAINKYLIAKGLLRKNGGAE.

In terms of domain architecture, Pyruvate carboxyltransferase spans 4–268 (IKIFDTTLRD…ETGIKTELIY (265 aa)). Positions 13, 203, 205, and 239 each coordinate Mn(2+). A regulatory domain region spans residues 392 to 513 (KLVHFHVHTG…GLLRKNGGAE (122 aa)).

This sequence belongs to the alpha-IPM synthase/homocitrate synthase family. LeuA type 1 subfamily. In terms of assembly, homodimer. Mn(2+) serves as cofactor.

The protein resides in the cytoplasm. The enzyme catalyses 3-methyl-2-oxobutanoate + acetyl-CoA + H2O = (2S)-2-isopropylmalate + CoA + H(+). It participates in amino-acid biosynthesis; L-leucine biosynthesis; L-leucine from 3-methyl-2-oxobutanoate: step 1/4. Its function is as follows. Catalyzes the condensation of the acetyl group of acetyl-CoA with 3-methyl-2-oxobutanoate (2-ketoisovalerate) to form 3-carboxy-3-hydroxy-4-methylpentanoate (2-isopropylmalate). The sequence is that of 2-isopropylmalate synthase from Thermotoga maritima (strain ATCC 43589 / DSM 3109 / JCM 10099 / NBRC 100826 / MSB8).